The chain runs to 264 residues: MIEELINKSKKIVIKIGSNTLSNDNGTINKNFLKELSEQIIYLRDKGKQFVIVSSGARIAGVSTLGKWMRKEDMNYKQALCAIGQVELMDAYRRCFEPYNVFIAQMLLTRDDFSDAHRRLNIRNTLFTLVDEGVIPIINENDTVSVEEIRIGDNDTLAALTTNIWNADLLILFSDIDGIYDKNPKEHEDAILVENVMNIDELLEKIEVGDVNEFGTGGIATKIEAAKAVNDYGIPMILANGKKENILLKLLEGTEKATIFQAGK.

Residue lysine 15 coordinates ATP. 3 residues coordinate substrate: serine 55, aspartate 142, and asparagine 154. ATP is bound by residues 174-175 and 216-222; these read SD and TGGIATK.

This sequence belongs to the glutamate 5-kinase family.

It is found in the cytoplasm. It carries out the reaction L-glutamate + ATP = L-glutamyl 5-phosphate + ADP. Its pathway is amino-acid biosynthesis; L-proline biosynthesis; L-glutamate 5-semialdehyde from L-glutamate: step 1/2. Its function is as follows. Catalyzes the transfer of a phosphate group to glutamate to form L-glutamate 5-phosphate. In Alkaliphilus metalliredigens (strain QYMF), this protein is Glutamate 5-kinase.